The chain runs to 322 residues: HPr kinase/phosphorylase (322 aa).

Residues His146 and Lys167 contribute to the active site. 161–168 (GDSGLGKS) lines the ATP pocket. Residue Ser168 participates in Mg(2+) binding. Asp185 acts as the Proton acceptor; for phosphorylation activity. Proton donor; for dephosphorylation activity in catalysis. The interval 209-218 (LEVRGLGLLD) is important for the catalytic mechanism of both phosphorylation and dephosphorylation. Glu210 provides a ligand contact to Mg(2+). Residue Arg250 is part of the active site. Positions 271-276 (QVAAGR) are important for the catalytic mechanism of dephosphorylation.

It belongs to the HPrK/P family. As to quaternary structure, homohexamer. Mg(2+) is required as a cofactor.

The catalysed reaction is [HPr protein]-L-serine + ATP = [HPr protein]-O-phospho-L-serine + ADP + H(+). The enzyme catalyses [HPr protein]-O-phospho-L-serine + phosphate + H(+) = [HPr protein]-L-serine + diphosphate. Its function is as follows. Catalyzes the ATP- as well as the pyrophosphate-dependent phosphorylation of a specific serine residue in HPr, a phosphocarrier protein of the phosphoenolpyruvate-dependent sugar phosphotransferase system (PTS). HprK/P also catalyzes the pyrophosphate-producing, inorganic phosphate-dependent dephosphorylation (phosphorolysis) of seryl-phosphorylated HPr (P-Ser-HPr). The chain is HPr kinase/phosphorylase from Paraburkholderia xenovorans (strain LB400).